The chain runs to 326 residues: Protein phosphatase PTC7 homolog fig (326 aa).

The disordered stretch occupies residues Val-40 to Lys-83. Residues Arg-64 to Val-314 form the PPM-type phosphatase domain. The Mn(2+) site is built by Asp-91, Gly-92, and Asp-236.

This sequence belongs to the PP2C family. It depends on Mg(2+) as a cofactor. Mn(2+) is required as a cofactor.

The catalysed reaction is O-phospho-L-seryl-[protein] + H2O = L-seryl-[protein] + phosphate. It carries out the reaction O-phospho-L-threonyl-[protein] + H2O = L-threonyl-[protein] + phosphate. In Drosophila persimilis (Fruit fly), this protein is Protein phosphatase PTC7 homolog fig.